The chain runs to 89 residues: Large ribosomal subunit protein eL31 (89 aa).

This sequence belongs to the eukaryotic ribosomal protein eL31 family.

The polypeptide is Large ribosomal subunit protein eL31 (Picrophilus torridus (strain ATCC 700027 / DSM 9790 / JCM 10055 / NBRC 100828 / KAW 2/3)).